The following is a 189-amino-acid chain: MMNTLNIDFQKTALVIIDLQKGIVPIDQSGQVVPNAKKLVDEFRKHNGFISFVNVAFHDGADALKPQTDEPAQGGSGEMPADWAEFVPEIGVQDGDYTVTKRQWGAFFGTDLDLQLRRRGIDTIVLCGIATNIGVESTAREAFQLGYQQIFITDAMSTFSDEEHEATLRFIFPRIGKSRTTEEFLEQVK.

This sequence belongs to the isochorismatase family.

This is an uncharacterized protein from Bacillus subtilis (strain 168).